Reading from the N-terminus, the 389-residue chain is Formate-dependent phosphoribosylglycinamide formyltransferase (389 aa).

Residues 12–13 (EL) and Glu-72 each bind N(1)-(5-phospho-beta-D-ribosyl)glycinamide. Residues Arg-104, Lys-145, 150–155 (SSGKGQ), 185–188 (EAFV), and Glu-193 contribute to the ATP site. The ATP-grasp domain maps to 109–300 (DLASKELGLR…EFELHARAVL (192 aa)). Mg(2+) is bound by residues Glu-258 and Glu-270. Residues Asp-277, Lys-348, and 355–356 (RR) contribute to the N(1)-(5-phospho-beta-D-ribosyl)glycinamide site.

It belongs to the PurK/PurT family. In terms of assembly, homodimer.

It catalyses the reaction N(1)-(5-phospho-beta-D-ribosyl)glycinamide + formate + ATP = N(2)-formyl-N(1)-(5-phospho-beta-D-ribosyl)glycinamide + ADP + phosphate + H(+). Its pathway is purine metabolism; IMP biosynthesis via de novo pathway; N(2)-formyl-N(1)-(5-phospho-D-ribosyl)glycinamide from N(1)-(5-phospho-D-ribosyl)glycinamide (formate route): step 1/1. Involved in the de novo purine biosynthesis. Catalyzes the transfer of formate to 5-phospho-ribosyl-glycinamide (GAR), producing 5-phospho-ribosyl-N-formylglycinamide (FGAR). Formate is provided by PurU via hydrolysis of 10-formyl-tetrahydrofolate. In Chlorobium phaeobacteroides (strain DSM 266 / SMG 266 / 2430), this protein is Formate-dependent phosphoribosylglycinamide formyltransferase.